A 420-amino-acid chain; its full sequence is UDP-N-acetylglucosamine 1-carboxyvinyltransferase (420 aa).

Residue 22 to 23 (KN) participates in phosphoenolpyruvate binding. R93 provides a ligand contact to UDP-N-acetyl-alpha-D-glucosamine. C117 (proton donor) is an active-site residue. C117 carries the 2-(S-cysteinyl)pyruvic acid O-phosphothioketal modification. Positions 307 and 329 each coordinate UDP-N-acetyl-alpha-D-glucosamine.

The protein belongs to the EPSP synthase family. MurA subfamily.

The protein resides in the cytoplasm. It carries out the reaction phosphoenolpyruvate + UDP-N-acetyl-alpha-D-glucosamine = UDP-N-acetyl-3-O-(1-carboxyvinyl)-alpha-D-glucosamine + phosphate. It participates in cell wall biogenesis; peptidoglycan biosynthesis. Its function is as follows. Cell wall formation. Adds enolpyruvyl to UDP-N-acetylglucosamine. The polypeptide is UDP-N-acetylglucosamine 1-carboxyvinyltransferase (Shewanella halifaxensis (strain HAW-EB4)).